Here is a 256-residue protein sequence, read N- to C-terminus: Imidazole glycerol phosphate synthase subunit HisF (256 aa).

Residues Asp-11 and Asp-130 contribute to the active site.

The protein belongs to the HisA/HisF family. Heterodimer of HisH and HisF.

The protein resides in the cytoplasm. The enzyme catalyses 5-[(5-phospho-1-deoxy-D-ribulos-1-ylimino)methylamino]-1-(5-phospho-beta-D-ribosyl)imidazole-4-carboxamide + L-glutamine = D-erythro-1-(imidazol-4-yl)glycerol 3-phosphate + 5-amino-1-(5-phospho-beta-D-ribosyl)imidazole-4-carboxamide + L-glutamate + H(+). It functions in the pathway amino-acid biosynthesis; L-histidine biosynthesis; L-histidine from 5-phospho-alpha-D-ribose 1-diphosphate: step 5/9. In terms of biological role, IGPS catalyzes the conversion of PRFAR and glutamine to IGP, AICAR and glutamate. The HisF subunit catalyzes the cyclization activity that produces IGP and AICAR from PRFAR using the ammonia provided by the HisH subunit. In Cupriavidus taiwanensis (strain DSM 17343 / BCRC 17206 / CCUG 44338 / CIP 107171 / LMG 19424 / R1) (Ralstonia taiwanensis (strain LMG 19424)), this protein is Imidazole glycerol phosphate synthase subunit HisF.